Consider the following 281-residue polypeptide: Urease accessory protein UreD (281 aa).

The disordered stretch occupies residues 1–25 (MLNTLEPQPCETDALSPRLQRSTGS).

It belongs to the UreD family. As to quaternary structure, ureD, UreF and UreG form a complex that acts as a GTP-hydrolysis-dependent molecular chaperone, activating the urease apoprotein by helping to assemble the nickel containing metallocenter of UreC. The UreE protein probably delivers the nickel.

Its subcellular location is the cytoplasm. Its function is as follows. Required for maturation of urease via the functional incorporation of the urease nickel metallocenter. The sequence is that of Urease accessory protein UreD from Dinoroseobacter shibae (strain DSM 16493 / NCIMB 14021 / DFL 12).